The following is a 615-amino-acid chain: Sodium-dependent dopamine transporter (615 aa).

Positions 1–39 (MQLVPTDDPDEKIGRTSNGMQNATLPIDGPVNTEPKDPA) are disordered. Residues 1–46 (MQLVPTDDPDEKIGRTSNGMQNATLPIDGPVNTEPKDPAREQWSGK) are Cytoplasmic-facing. A compositionally biased stretch (polar residues) spans 15 to 24 (RTSNGMQNAT). Residues 47–72 (LDFLLSVVGFAVDLGNIWRFPYLCFK) form a helical membrane-spanning segment. Na(+) contacts are provided by G55, A57, V58, and N62. Residues 73–76 (NGGG) lie on the Extracellular side of the membrane. Residues 77 to 100 (VFLIPYSIMVLLTGVPLFYMELCL) traverse the membrane as a helical segment. The Cytoplasmic segment spans residues 101–120 (GQYYRKGAITTWGRICPLFK). Residues 121 to 151 (GIGYCVILTAFYVDFFYNVILAWGLHYLYTS) form a helical membrane-spanning segment. The Extracellular portion of the chain corresponds to 152–229 (FSFNLPWASC…IRSVTDLGNV (78 aa)). The cysteines at positions 161 and 170 are disulfide-linked. 2 N-linked (GlcNAc...) asparagine glycosylation sites follow: N162 and N187. The chain crosses the membrane as a helical span at residues 230 to 250 (RWDIALSLFVVYLICYFSMWK). Over 251–253 (GIH) the chain is Cytoplasmic. A helical transmembrane segment spans residues 254–278 (TSGKVVWFTALFPYVVLGILFIRGV). Residues 279 to 302 (TLPGWQNGIEYYLRPNFEMLKRPS) lie on the Extracellular side of the membrane. A helical transmembrane segment spans residues 303–328 (VWQDAATQVFFSLGPGFGVLMAYSSY). S314 is a Na(+) binding site. Topologically, residues 329-334 (NDFHNN) are cytoplasmic. A helical membrane pass occupies residues 335-358 (VYVDALFTSFINCATSFLSGFVIF). Na(+) is bound at residue N346. The Extracellular segment spans residues 359–398 (SVLGYMSCKSGKPIEAVAQEGPGLVFVVYPEALSTMPYAP). The helical transmembrane segment at 399–424 (FWSVLFFLMLMTLGLDSSFGGSEAII) threads the bilayer. L411, D414, and S415 together coordinate Na(+). Residues 425 to 439 (TGLSDEFPILKKNRE) are Cytoplasmic-facing. Residues 440–460 (VFVGCLFAFYMVIGIAMCTEG) traverse the membrane as a helical segment. Position 461 (G461) is a topological domain, extracellular. The helical transmembrane segment at 462 to 488 (ILIMEWLIIYGTTWGLLIAVFCEAMVI) threads the bilayer. Residues 489–518 (AYIYGLRQFVHDVKEMMGFRPGNYWKFCWS) are Cytoplasmic-facing. The chain crosses the membrane as a helical span at residues 519-541 (CAAPFILLSMITSNFINYQALTY). At 542–544 (QDY) the chain is on the extracellular side. A helical membrane pass occupies residues 545 to 565 (TYPTAANVIGIIFALSGASFI). Residues 566–615 (PLVGIYKFVNARGNTISEKWQRVTMPYRKRPNQTEYIPIPTTQPHSDIML) are Cytoplasmic-facing.

Belongs to the sodium:neurotransmitter symporter (SNF) (TC 2.A.22) family.

It localises to the cell membrane. In terms of biological role, dopamine transporter. Terminates the action of dopamine by its high affinity sodium-dependent reuptake into presynaptic terminals. Plays a role in the learned avoidance behavior of animals exposed to food that induces mitochondrial stress. In Caenorhabditis elegans, this protein is Sodium-dependent dopamine transporter.